Here is a 362-residue protein sequence, read N- to C-terminus: Cobalt-precorrin-5B C(1)-methyltransferase (362 aa).

This sequence belongs to the CbiD family.

It catalyses the reaction Co-precorrin-5B + S-adenosyl-L-methionine = Co-precorrin-6A + S-adenosyl-L-homocysteine. It functions in the pathway cofactor biosynthesis; adenosylcobalamin biosynthesis; cob(II)yrinate a,c-diamide from sirohydrochlorin (anaerobic route): step 6/10. In terms of biological role, catalyzes the methylation of C-1 in cobalt-precorrin-5B to form cobalt-precorrin-6A. This chain is Cobalt-precorrin-5B C(1)-methyltransferase, found in Geotalea daltonii (strain DSM 22248 / JCM 15807 / FRC-32) (Geobacter daltonii).